The chain runs to 309 residues: MATRTESKKQIPPYMKAVSGSLGGVVEACCLQPIDVIKTRLQLDRVGAYKGIAHCGSKVVRTEGVRALWKGLTPFATHLTLKYTLRMGSNAMFQTAFKDSETGKVSNRGRFLSGFGAGVLEALAIVTPFEVVKIRLQQQKGLSPELFKYKGPIHCARTIVREESILGLWSGAAPTVMRNGTNQAVMFTAKNAFDILLWNKHEGDGKILQPWQSMISGFLAGTAGPFCTGPFDVVKTRLMAQSRDSEGGIRYKGMVHAIRTIYAEEGLVALWRGLLPRLMRIPPGQAIMWAVADQVTGLYEMRYLRNAPL.

Solcar repeat units follow at residues 11 to 96 (IPPY…FQTA), 108 to 196 (RGRF…FDIL), and 208 to 298 (LQPW…VTGL). The next 6 membrane-spanning stretches (helical) occupy residues 17–37 (AVSGSLGGVVEACCLQPIDVI), 65–85 (VRALWKGLTPFATHLTLKYTL), 111–131 (FLSGFGAGVLEALAIVTPFEV), 171–191 (GAAPTVMRNGTNQAVMFTAKN), 214–234 (MISGFLAGTAGPFCTGPFDVV), and 273–293 (GLLPRLMRIPPGQAIMWAVAD).

The protein belongs to the mitochondrial carrier (TC 2.A.29) family. Expressed in root tips, cotyledons, hypocotyls, leaves, trichomes, stems, flowers, carpels, anthers, pollen and abscission zone of siliques.

It localises to the mitochondrion inner membrane. Functionally, may transport cytoplasmic succinate, derived from fatty acid oxidation, into the mitochondrial matrix in exchange of fumarate during lipid mobilization in seed germination. Conversion of seed-reserved triacylglycerols into sucrose is necessary for growth before the onset of photosynthesis and involves fatty acid beta-oxidation, the glyoxylate cycle and gluconeogenesis. The sequence is that of Mitochondrial succinate-fumarate transporter 1 (SFC1) from Arabidopsis thaliana (Mouse-ear cress).